Consider the following 156-residue polypeptide: 6,7-dimethyl-8-ribityllumazine synthase (156 aa).

5-amino-6-(D-ribitylamino)uracil-binding positions include Phe25, 59 to 61, and 83 to 85; these read AFE and AVI. 88–89 contributes to the (2S)-2-hydroxy-3-oxobutyl phosphate binding site; it reads AT. Residue His91 is the Proton donor of the active site. Phe116 contacts 5-amino-6-(D-ribitylamino)uracil. Residue Arg130 participates in (2S)-2-hydroxy-3-oxobutyl phosphate binding.

It belongs to the DMRL synthase family.

It carries out the reaction (2S)-2-hydroxy-3-oxobutyl phosphate + 5-amino-6-(D-ribitylamino)uracil = 6,7-dimethyl-8-(1-D-ribityl)lumazine + phosphate + 2 H2O + H(+). It functions in the pathway cofactor biosynthesis; riboflavin biosynthesis; riboflavin from 2-hydroxy-3-oxobutyl phosphate and 5-amino-6-(D-ribitylamino)uracil: step 1/2. Catalyzes the formation of 6,7-dimethyl-8-ribityllumazine by condensation of 5-amino-6-(D-ribitylamino)uracil with 3,4-dihydroxy-2-butanone 4-phosphate. This is the penultimate step in the biosynthesis of riboflavin. The chain is 6,7-dimethyl-8-ribityllumazine synthase from Nitratidesulfovibrio vulgaris (strain DSM 19637 / Miyazaki F) (Desulfovibrio vulgaris).